We begin with the raw amino-acid sequence, 243 residues long: ATP synthase subunit a, chloroplastic (243 aa).

5 helical membrane-spanning segments follow: residues 32–52 (AQVLITSWFVLGLLLGIALIA), 91–111 (IPFVGTLFLFIFVSNWSGALI), 130–150 (INTTVALALLTSVAYFYAGLN), 195–215 (LVVAVLVSLVPLVIPVPMMFL), and 216–236 (GLFTSGIQALIFATLAGAYIG).

It belongs to the ATPase A chain family. F-type ATPases have 2 components, CF(1) - the catalytic core - and CF(0) - the membrane proton channel. CF(1) has five subunits: alpha(3), beta(3), gamma(1), delta(1), epsilon(1). CF(0) has four main subunits: a, b, b' and c.

The protein localises to the plastid. The protein resides in the chloroplast thylakoid membrane. Its function is as follows. Key component of the proton channel; it plays a direct role in the translocation of protons across the membrane. The protein is ATP synthase subunit a, chloroplastic of Chaetosphaeridium globosum (Charophycean green alga).